The following is an 869-amino-acid chain: Alanine--tRNA ligase (869 aa).

4 residues coordinate Zn(2+): histidine 559, histidine 563, cysteine 660, and histidine 664.

This sequence belongs to the class-II aminoacyl-tRNA synthetase family. It depends on Zn(2+) as a cofactor.

It is found in the cytoplasm. It carries out the reaction tRNA(Ala) + L-alanine + ATP = L-alanyl-tRNA(Ala) + AMP + diphosphate. Catalyzes the attachment of alanine to tRNA(Ala) in a two-step reaction: alanine is first activated by ATP to form Ala-AMP and then transferred to the acceptor end of tRNA(Ala). Also edits incorrectly charged Ser-tRNA(Ala) and Gly-tRNA(Ala) via its editing domain. This Janthinobacterium sp. (strain Marseille) (Minibacterium massiliensis) protein is Alanine--tRNA ligase.